Reading from the N-terminus, the 352-residue chain is C-C chemokine receptor type 5 (352 aa).

The Extracellular portion of the chain corresponds to 1-30 (MDYQVSSPTYDIDYYTSEPCQKTNVKQIAA). Tyrosine 3 bears the Sulfotyrosine mark. Serine 6 and serine 7 each carry an O-linked (GalNAc...) serine glycan. 3 positions are modified to sulfotyrosine: tyrosine 10, tyrosine 14, and tyrosine 15. 2 cysteine pairs are disulfide-bonded: cysteine 20–cysteine 269 and cysteine 101–cysteine 178. Residues 31–58 (RLLPPLYSLVFIFGFVGNMLVILILINC) form a helical membrane-spanning segment. Residues 59–68 (KRLKSMTDIY) lie on the Cytoplasmic side of the membrane. Residues 69-89 (LLNLAISDLFFLLTVPFWAHY) form a helical membrane-spanning segment. Residues 90-102 (AAAQWDFGNTMCQ) are Extracellular-facing. Residues 103-124 (LLTGLYFIGFFSGIFFIILLTI) traverse the membrane as a helical segment. The Cytoplasmic segment spans residues 125-141 (DRYLAIVHAVFALKART). The chain crosses the membrane as a helical span at residues 142–166 (VTFGVVTSVITWVVAVFASLPGIIF). Over 167-198 (TRSQKEGLHYTCSSHFPYSQYQFWKNFQTLKI) the chain is Extracellular. Residues 199 to 218 (VILGLVLPLLVMVICYSGIL) form a helical membrane-spanning segment. Topologically, residues 219–235 (KTLLRCRNEKKRHRAVR) are cytoplasmic. A helical membrane pass occupies residues 236–260 (LIFTIMIVYFLFWAPYNIVLLLNTF). At 261-277 (QEFFGLNNCSSSNRLDQ) the chain is on the extracellular side. Residues 278-301 (AMQVTETLGMTHCCINPIIYAFVG) traverse the membrane as a helical segment. Topologically, residues 302–352 (EKFRNYLLVFFQKHIAKRFCKCCSIFQQEAPERASSVYTRSTGEQEISVGL) are cytoplasmic. Residues cysteine 321, cysteine 323, and cysteine 324 are each lipidated (S-palmitoyl cysteine). 4 positions are modified to phosphoserine; by BARK1: serine 336, serine 337, serine 342, and serine 349.

Belongs to the G-protein coupled receptor 1 family. Interacts with PRAF2. Efficient ligand binding to CCL3/MIP-1alpha and CCL4/MIP-1beta requires sulfation, O-glycosylation and sialic acid modifications. Glycosylation on Ser-6 is required for efficient binding of CCL4. Interacts with GRK2. Interacts with ARRB1 and ARRB2. Interacts with CNIH4. Interacts with S100A4; this interaction stimulates T-lymphocyte chemotaxis. In terms of processing, sulfated on at least 2 of the N-terminal tyrosines. Sulfation is required for efficient binding of the chemokines, CCL3 and CCL4. Post-translationally, palmitoylation in the C-terminal is important for cell surface expression. Phosphorylation on serine residues in the C-terminal is stimulated by binding CC chemokines especially by APO-RANTES. In terms of processing, O-glycosylated, but not N-glycosylated. Ser-6 appears to be the major site even if Ser-7 may be also O-glycosylated. Also sialylated glycans present which contribute to chemokine binding. Thr-16 and Ser-17 may also be glycosylated and, if so, with small moieties such as a T-antigen.

It localises to the cell membrane. Its function is as follows. Receptor for a number of inflammatory CC-chemokines including CCL3/MIP-1-alpha, CCL4/MIP-1-beta and RANTES and subsequently transduces a signal by increasing the intracellular calcium ion level. May play a role in the control of granulocytic lineage proliferation or differentiation. Participates in T-lymphocyte migration to the infection site by acting as a chemotactic receptor. This is C-C chemokine receptor type 5 (CCR5) from Gorilla gorilla gorilla (Western lowland gorilla).